The chain runs to 307 residues: Transaldolase (307 aa).

K125 functions as the Schiff-base intermediate with substrate in the catalytic mechanism.

The protein belongs to the transaldolase family. Type 1 subfamily.

Its subcellular location is the cytoplasm. The enzyme catalyses D-sedoheptulose 7-phosphate + D-glyceraldehyde 3-phosphate = D-erythrose 4-phosphate + beta-D-fructose 6-phosphate. Its pathway is carbohydrate degradation; pentose phosphate pathway; D-glyceraldehyde 3-phosphate and beta-D-fructose 6-phosphate from D-ribose 5-phosphate and D-xylulose 5-phosphate (non-oxidative stage): step 2/3. Its function is as follows. Transaldolase is important for the balance of metabolites in the pentose-phosphate pathway. The protein is Transaldolase of Pseudomonas aeruginosa (strain ATCC 15692 / DSM 22644 / CIP 104116 / JCM 14847 / LMG 12228 / 1C / PRS 101 / PAO1).